The sequence spans 115 residues: Phosphoribosyl-ATP pyrophosphatase (115 aa).

This sequence belongs to the PRA-PH family.

Its subcellular location is the cytoplasm. It catalyses the reaction 1-(5-phospho-beta-D-ribosyl)-ATP + H2O = 1-(5-phospho-beta-D-ribosyl)-5'-AMP + diphosphate + H(+). Its pathway is amino-acid biosynthesis; L-histidine biosynthesis; L-histidine from 5-phospho-alpha-D-ribose 1-diphosphate: step 2/9. The chain is Phosphoribosyl-ATP pyrophosphatase from Bordetella parapertussis (strain 12822 / ATCC BAA-587 / NCTC 13253).